We begin with the raw amino-acid sequence, 357 residues long: Putative DENN domain-containing protein 10 B (357 aa).

A uDENN domain is found at 1–140 (MAAAELADTQ…TKGICQSEEN (140 aa)). A cDENN domain is found at 159-299 (IKDIVSQFGM…PEKSESQVIQ (141 aa)). In terms of domain architecture, dDENN spans 301 to 357 (IALKTREIFTNLAPFSEVSADGEKRVLNLEALKQKRFPPATENFLYHLAAAEQMLKI).

The protein belongs to the DENND10 family.

The protein resides in the late endosome. In terms of biological role, may be a guanine nucleotide exchange factor (GEF). This is Putative DENN domain-containing protein 10 B from Homo sapiens (Human).